Reading from the N-terminus, the 131-residue chain is D-ribose pyranase (131 aa).

His20 serves as the catalytic Proton donor. Substrate is bound by residues Asp28, His98, and 120-122; that span reads YAN.

Belongs to the RbsD / FucU family. RbsD subfamily. In terms of assembly, homodecamer.

The protein resides in the cytoplasm. The catalysed reaction is beta-D-ribopyranose = beta-D-ribofuranose. The protein operates within carbohydrate metabolism; D-ribose degradation; D-ribose 5-phosphate from beta-D-ribopyranose: step 1/2. Functionally, catalyzes the interconversion of beta-pyran and beta-furan forms of D-ribose. The protein is D-ribose pyranase of Enterococcus faecalis (strain ATCC 700802 / V583).